Reading from the N-terminus, the 269-residue chain is Polyamine aminopropyltransferase (269 aa).

The PABS domain maps to 1–226 (MVWFFEYYDG…ALWSFIIGGE (226 aa)). An S-methyl-5'-thioadenosine-binding site is contributed by glutamine 28. 2 residues coordinate spermidine: histidine 59 and aspartate 83. Residues aspartate 102 and 133-134 (DG) contribute to the S-methyl-5'-thioadenosine site. Aspartate 150 (proton acceptor) is an active-site residue. 150 to 153 (DSTD) is a spermidine binding site.

The protein belongs to the spermidine/spermine synthase family. As to quaternary structure, homodimer or homotetramer.

Its subcellular location is the cytoplasm. It catalyses the reaction S-adenosyl 3-(methylsulfanyl)propylamine + putrescine = S-methyl-5'-thioadenosine + spermidine + H(+). Its pathway is amine and polyamine biosynthesis; spermidine biosynthesis; spermidine from putrescine: step 1/1. Catalyzes the irreversible transfer of a propylamine group from the amino donor S-adenosylmethioninamine (decarboxy-AdoMet) to putrescine (1,4-diaminobutane) to yield spermidine. The protein is Polyamine aminopropyltransferase of Archaeoglobus fulgidus (strain ATCC 49558 / DSM 4304 / JCM 9628 / NBRC 100126 / VC-16).